Here is a 260-residue protein sequence, read N- to C-terminus: Transcriptional activator protein AsaR (260 aa).

An HTH luxR-type domain is found at 176-241 (EDDPQEALTD…QAIAKGVSSG (66 aa)). A DNA-binding region (H-T-H motif) is located at residues 200-219 (SGEIACILGITERTVNYHLN).

This sequence belongs to the autoinducer-regulated transcriptional regulatory protein family.

In terms of biological role, functions as a BHL-responsive transcriptional regulator. The sequence is that of Transcriptional activator protein AsaR from Aeromonas salmonicida.